We begin with the raw amino-acid sequence, 618 residues long: Probable Xaa-Pro aminopeptidase P (618 aa).

Positions 414, 425, 523, and 537 each coordinate Mn(2+).

This sequence belongs to the peptidase M24B family. It depends on Mn(2+) as a cofactor.

It carries out the reaction Release of any N-terminal amino acid, including proline, that is linked to proline, even from a dipeptide or tripeptide.. Functionally, catalyzes the removal of a penultimate prolyl residue from the N-termini of peptides. This chain is Probable Xaa-Pro aminopeptidase P (AMPP), found in Metarhizium robertsii (strain ARSEF 23 / ATCC MYA-3075) (Metarhizium anisopliae (strain ARSEF 23)).